The chain runs to 228 residues: Elongation factor 1-beta 1 (228 aa).

Alanine 2 bears the N-acetylalanine mark. The region spanning leucine 14–leucine 65 is the GST C-terminal domain. Residues glycine 75–lysine 139 are disordered. Acidic residues predominate over residues proline 95–glutamate 115. The span at aspartate 116–glycine 138 shows a compositional bias: basic and acidic residues.

Belongs to the EF-1-beta/EF-1-delta family. As to quaternary structure, EF-1 is composed of 4 subunits: alpha, beta (1B-alpha=beta'), delta (1B-beta), and gamma (1B-gamma).

It is found in the cell membrane. Functionally, EF-1-beta and EF-1-delta stimulate the exchange of GDP bound to EF-1-alpha to GTP. The chain is Elongation factor 1-beta 1 from Arabidopsis thaliana (Mouse-ear cress).